A 387-amino-acid chain; its full sequence is GDP-mannose transporter (387 aa).

Residues 1–25 are compositionally biased toward basic and acidic residues; sequence MADTKKNDNYAIDMDKLDAESDRFR. At 1-42 the chain is on the cytoplasmic side; sequence MADTKKNDNYAIDMDKLDAESDRFRPPPQPQPRHSSSSHSQS. Residues 1–45 are disordered; it reads MADTKKNDNYAIDMDKLDAESDRFRPPPQPQPRHSSSSHSQSISN. Low complexity predominate over residues 32–45; it reads PRHSSSSHSQSISN. Residues 43-63 traverse the membrane as a helical segment; that stretch reads ISNSPVLPILSYCASSILMTV. Topologically, residues 64-71 are lumenal; the sequence is TNKYVLSG. Residues 72 to 92 form a helical membrane-spanning segment; it reads VQFNLNFFLLCVQSVVCIIAI. The Cytoplasmic portion of the chain corresponds to 93-112; it reads QTCKSMGLINYRDFNSDEAK. A helical transmembrane segment spans residues 113–129; it reads KWFPISLLLIGMIYTGT. Over 130–136 the chain is Lumenal; the sequence is KALKFLS. Residues 137–153 form a helical membrane-spanning segment; sequence IPVYTIFKNLTIILIAY. At 154-162 the chain is on the cytoplasmic side; the sequence is GEVLWFGGS. Residues 163–184 traverse the membrane as a helical segment; sequence VTGMALFSFGLMVLSSVIAAWA. Over 185 to 206 the chain is Lumenal; sequence DIKHALDTSGFSGAEATSKIST. A helical membrane pass occupies residues 207–227; the sequence is LNAGYIWMLINCLCTSTYILG. At 228–241 the chain is on the cytoplasmic side; the sequence is MRKRIKLTNFKDFD. Residues 242-262 traverse the membrane as a helical segment; it reads TMFYNNLLSIPILMIGSFIVE. Residues 263 to 280 lie on the Lumenal side of the membrane; the sequence is DWSSENINKNFPIETRNS. The chain crosses the membrane as a helical span at residues 281–301; that stretch reads LIFAMIFSGLSSVFISYTSAW. Residues 302 to 309 lie on the Cytoplasmic side of the membrane; it reads CVRVTSST. The helical transmembrane segment at 310–329 threads the bilayer; that stretch reads TYSMVGALNKLPIALSGLIF. Topologically, residues 330–332 are lumenal; it reads FGD. A helical transmembrane segment spans residues 333–355; that stretch reads PVTVPSVSAIVVGFISGIVYSLA. Residues 356–387 are Cytoplasmic-facing; it reads KVKQNAKPRTGVLPTTNPVSASTQSMRDGLKS. The segment at 366–387 is disordered; that stretch reads GVLPTTNPVSASTQSMRDGLKS. Residues 368–381 are compositionally biased toward polar residues; sequence LPTTNPVSASTQSM.

The protein belongs to the TPT transporter family. SLC35D subfamily. Homooligomer.

It localises to the golgi apparatus membrane. It is found in the cytoplasmic vesicle membrane. The protein localises to the endoplasmic reticulum membrane. Its function is as follows. Involved in the import of GDP-mannose from the cytoplasm into the Golgi lumen. This is GDP-mannose transporter (VRG4) from Coccidioides immitis (strain RS) (Valley fever fungus).